A 265-amino-acid chain; its full sequence is MKSFVLFAACMAIIALGSLAHAYPQKLPVPIPPPSNPPVAVLQNSVATNSKGGQDVSVKLSATNLGNNHVQPIAEVFAEGNTKGGNVLRGATVGVQGHGLGASVTKTQTDTKIKGLDFQPQLSSSTLALQGDRLGASISRDVNRGVSDTFTKSVSANVFRNDNHNLDATVFRSDVRQNNGFNFQKTGGMLDYSHANGHGLNAGLTHFSGIGNQANVGGSSTLFKSNDGSLSLKANAGGSQWLSGPFSNQRDYNVGLSLTHHGCGG.

A signal peptide spans 1 to 22 (MKSFVLFAACMAIIALGSLAHA). The propeptide at 23 to 24 (YP) is removed by a dipeptidylpeptidase. Pyrrolidone carboxylic acid is present on Gln-25. Gly-264 carries the post-translational modification Glycine amide.

The protein belongs to the attacin/sarcotoxin-2 family. As to expression, synthesized by the fat body and is eventually secreted into the hemolymph.

Its subcellular location is the secreted. Sarcotoxin II is an antibacterial protein which plays a role in the inflammatory response of this insect. The main effect of sarcotoxin II on E.coli may be the inhibition of cell wall synthesis, including septum formation. The chain is Sarcotoxin II-1 from Sarcophaga peregrina (Flesh fly).